The sequence spans 478 residues: Cytochrome c lysine N-methyltransferase 1 (478 aa).

The SET domain occupies 32–284 (PCVSIERSQI…DRFEVFISYC (253 aa)). The SET-like stretch occupies residues 199–299 (TRAVVLRVYA…VHFKHTYGFF (101 aa)).

Belongs to the class V-like SAM-binding methyltransferase superfamily.

The protein resides in the cytoplasm. It is found in the cytosol. It carries out the reaction L-lysyl-[cytochrome c] + S-adenosyl-L-methionine = N(6)-methyl-L-lysyl-[cytochrome c] + S-adenosyl-L-homocysteine + H(+). In terms of biological role, methyltransferase which mediates trimethylation of cytochrome c (CYC1). The polypeptide is Cytochrome c lysine N-methyltransferase 1 (CTM1) (Eremothecium gossypii (strain ATCC 10895 / CBS 109.51 / FGSC 9923 / NRRL Y-1056) (Yeast)).